The primary structure comprises 541 residues: Phosphoenolpyruvate carboxykinase (ATP) (541 aa).

Residue 243–250 coordinates ATP; it reads GLSGTGKT.

This sequence belongs to the phosphoenolpyruvate carboxykinase (ATP) family.

The catalysed reaction is oxaloacetate + ATP = phosphoenolpyruvate + ADP + CO2. It participates in carbohydrate biosynthesis; gluconeogenesis. In Eremothecium gossypii (strain ATCC 10895 / CBS 109.51 / FGSC 9923 / NRRL Y-1056) (Yeast), this protein is Phosphoenolpyruvate carboxykinase (ATP) (PCK1).